The chain runs to 299 residues: MEQHFEHLSCIPYLENTEASRYQTLDIWIPTRHQHGDSTHGYWIIFIHGGAWRDPDINATNFAEKAVLDLITSGVSQIIEGIASINYRLSPRTPSQPVPSGGHVGGEQQAMHPDHLNDVISGIEYLQRKFRFGNRYILTGHSCGATLAYQTLIRQTMDKTETHAAPHAIIGVAGLYDLPLLRDMDPMPPMCHQFLLAAFGSDETLWRDVSPATYGDFERLWPTGKLAVLVYCEDDEYVSPAQLNTMYHALEIWGEKEGRLVKTLKLPGGHDEVWRTGSGLASCVEKSINYLQDLSVSEA.

Residues 48 to 52 (HGGAW) carry the HGGXW motif. The segment at 90–110 (SPRTPSQPVPSGGHVGGEQQA) is disordered. S142 (nucleophile) is an active-site residue.

This sequence belongs to the kynurenine formamidase family.

The protein operates within secondary metabolite biosynthesis. In terms of biological role, kynurenine formamidase-like hydrolase; part of the fragmented gene cluster that mediates the biosynthesis of fusarochromene, a tryptophan-derived metabolite closely related to a group of mycotoxins including fusarochromanone. Within the pathway, fscH converts the product of fscD into 4-hydroxykyrunenine. The first step of the pathway is the epimerization of L-tryptophan to D-tryptophan in the presence of the NRPS-like tryptophan epimerase fscC. D-tryptophan is subsequently hydroxylated by the tryptophan 6-hydroxylase fscE to yield 6-hydroxytryptophan. The pyrrole ring undergoes cleavaged by the tryptophan 2,3-dioxygenase fscD and is finally converted to 4-hydroxykyrunenine by the hydrolase fscH. The NRPS-like oxidoreductase fscA reduces the carboxyl group to primary alcohol and the DMATS-type prenyltransferase fscG performs prenylation, followed by the formation of a chromene ring catalyzed by the oxidoreductase fscI, which leads to desacetylfusarochromene. Epoxidation by fscF and rearrangement reactions of chromene double bonds convert compound desacetylfusarochromene to fusarochromanones. Although specific acetyltransferases were not found near the fsc gene cluster, several predicted enzymes containing the N-acetyltransferase superfamily domain are present in the genome of F.equiseti. These predicted enzymes may have the potential to convert desacetylfusarochromene to fusarochromene. The polypeptide is Kynurenine formamidase-like hydrolase fscH (Fusarium equiseti (Fusarium scirpi)).